Here is a 141-residue protein sequence, read N- to C-terminus: Large ribosomal subunit protein uL16 (141 aa).

The interval 1 to 23 (MLMPKRTKWRKQQKGRNRGKSFR) is disordered.

The protein belongs to the universal ribosomal protein uL16 family. Part of the 50S ribosomal subunit.

Functionally, binds 23S rRNA and is also seen to make contacts with the A and possibly P site tRNAs. This is Large ribosomal subunit protein uL16 from Sulfurovum sp. (strain NBC37-1).